Consider the following 61-residue polypeptide: Potassium channel toxin kappa-KTx 2.8 (61 aa).

The N-terminal stretch at 1–21 (GTVYVFLLLLAFGIFTDISNA) is a signal peptide. Positions 22 to 35 (CSEQMDDEDSYEVE) are excised as a propeptide. 2 cysteine pairs are disulfide-bonded: Cys41/Cys59 and Cys45/Cys55.

This sequence belongs to the short scorpion toxin superfamily. Potassium channel inhibitor kappa-KTx family. Kappa-KTx 2 subfamily. Expressed by the venom gland.

The protein resides in the secreted. Voltage-gated potassium channel inhibitor (Kv) that acts on Kv1.3/KCNA3 and Kv7.1/KCNQ1. 1 uM of the toxin inhibits Kv1.3/KCNA3 currents by 35.1%, whereas 10 uM of the toxin inhibits Kv7.1/KCNQ1 currents by 44.9%. In Heterometrus petersii (Asian forest scorpion), this protein is Potassium channel toxin kappa-KTx 2.8.